The following is a 278-amino-acid chain: Tryptophan synthase alpha chain (278 aa).

Catalysis depends on proton acceptor residues Glu-49 and Asp-60.

Belongs to the TrpA family. Tetramer of two alpha and two beta chains.

The enzyme catalyses (1S,2R)-1-C-(indol-3-yl)glycerol 3-phosphate + L-serine = D-glyceraldehyde 3-phosphate + L-tryptophan + H2O. It participates in amino-acid biosynthesis; L-tryptophan biosynthesis; L-tryptophan from chorismate: step 5/5. The alpha subunit is responsible for the aldol cleavage of indoleglycerol phosphate to indole and glyceraldehyde 3-phosphate. The protein is Tryptophan synthase alpha chain of Granulibacter bethesdensis (strain ATCC BAA-1260 / CGDNIH1).